We begin with the raw amino-acid sequence, 289 residues long: ATP synthase gamma chain (289 aa).

Belongs to the ATPase gamma chain family. As to quaternary structure, F-type ATPases have 2 components, CF(1) - the catalytic core - and CF(0) - the membrane proton channel. CF(1) has five subunits: alpha(3), beta(3), gamma(1), delta(1), epsilon(1). CF(0) has three main subunits: a, b and c.

It localises to the cell inner membrane. In terms of biological role, produces ATP from ADP in the presence of a proton gradient across the membrane. The gamma chain is believed to be important in regulating ATPase activity and the flow of protons through the CF(0) complex. The protein is ATP synthase gamma chain of Phocaeicola vulgatus (strain ATCC 8482 / DSM 1447 / JCM 5826 / CCUG 4940 / NBRC 14291 / NCTC 11154) (Bacteroides vulgatus).